Reading from the N-terminus, the 68-residue chain is uncharacterized protein (68 aa).

This is an uncharacterized protein from Dictyostelium discoideum (Social amoeba).